The primary structure comprises 931 residues: Phosphoenolpyruvate carboxylase (931 aa).

Residues His138 and Lys594 contribute to the active site.

Belongs to the PEPCase type 1 family. The cofactor is Mg(2+).

The catalysed reaction is oxaloacetate + phosphate = phosphoenolpyruvate + hydrogencarbonate. Functionally, forms oxaloacetate, a four-carbon dicarboxylic acid source for the tricarboxylic acid cycle. In Streptococcus agalactiae serotype Ia (strain ATCC 27591 / A909 / CDC SS700), this protein is Phosphoenolpyruvate carboxylase.